A 301-amino-acid polypeptide reads, in one-letter code: 33 kDa chaperonin (301 aa).

Cystine bridges form between Cys240-Cys242 and Cys273-Cys276.

This sequence belongs to the HSP33 family. Post-translationally, under oxidizing conditions two disulfide bonds are formed involving the reactive cysteines. Under reducing conditions zinc is bound to the reactive cysteines and the protein is inactive.

It localises to the cytoplasm. Redox regulated molecular chaperone. Protects both thermally unfolding and oxidatively damaged proteins from irreversible aggregation. Plays an important role in the bacterial defense system toward oxidative stress. This chain is 33 kDa chaperonin, found in Rippkaea orientalis (strain PCC 8801 / RF-1) (Cyanothece sp. (strain PCC 8801)).